The primary structure comprises 5084 residues: Apicidin F synthase (5084 aa).

Positions 209–606 are adenylation 1; the sequence is ARILQRQPDK…VGRLDSQVKL (398 aa). The Carrier 1 domain occupies 731–808; that stretch reads HETDNCQRLL…EAASSMREVV (78 aa). Residue Ser768 is modified to O-(pantetheine 4'-phosphoryl)serine. Condensation regions lie at residues 822–1124 and 1309–1609; these read YPLS…FPIY and EIYC…SILV. The segment at 1788-2192 is adenylation 2; it reads EDPTREAVFS…IGRKDNQIKI (405 aa). The region spanning 2341 to 2415 is the Carrier 2 domain; it reads VVKDDPVSEL…DMAKGMAPLS (75 aa). Residue Ser2376 is modified to O-(pantetheine 4'-phosphoryl)serine. The disordered stretch occupies residues 2415 to 2441; the sequence is SLTAPESTSSSSPQSFSTSTSTTIIEN. Residues 2421–2437 are compositionally biased toward low complexity; sequence STSSSSPQSFSTSTSTT. Positions 2478-2755 are condensation 3; sequence EDIFPCTPMQ…IVTLPRQLNI (278 aa). Residues 2935–3328 are adenylation 3; the sequence is RNNPRARAVV…GRRDGQIKLR (394 aa). In terms of domain architecture, Carrier 3 spans 3463 to 3539; sequence ETWSSSEAIV…DMASRLSRPE (77 aa). Ser3500 carries the post-translational modification O-(pantetheine 4'-phosphoryl)serine. The condensation 4 stretch occupies residues 3581 to 3866; sequence EDIYPCTPLQ…IATVPSRTTI (286 aa). The adenylation 4 stretch occupies residues 4029 to 4426; sequence RKQVELSPSH…TVSWIGRKDH (398 aa). One can recognise a Carrier 4 domain in the interval 4554 to 4631; sequence ALKTPKERLL…DMADLLGPLR (78 aa). Ser4592 is subject to O-(pantetheine 4'-phosphoryl)serine. The condensation 5 stretch occupies residues 4669–4948; sequence EQIYPCTAYQ…ISKLPLRIQL (280 aa).

This sequence belongs to the NRP synthetase family.

Its pathway is secondary metabolite biosynthesis. In terms of biological role, non-ribosomal peptide synthetase; part of the gene cluster that mediates the biosynthesis of the cyclic tetrapeptide apicidin F (APF). The non-ribosomal peptide synthetase apf1 incorporates four different amino acids to produce apicidin F: L-phenylalanine, D-pipecolic acid (D-pip), N-methoxy-L-tryptophan and L-2-aminooctanedioic acid. L-Phenylalanine is the only proteinogenic amino acid directly used by apf1. The 3 other apf1 substrates are non-proteinogenic and have to be modified by other enzymes of the cluster. Lysine is converted to delta-1-pyrroline-5-carboxylate (P5C) which is reduced to L-pipecolic acid (L-pip) by apf3. L-pip is epimerized to D-pip, probably by apf1 activity, prior to incorporation. L-Tryptophan is N-oxidyzed by one of the cytochrome P450 monooxygenases (apf7 or apf8), and further methylated at the hydroxy group by the O-methyltransferase apf6 to yield N-methoxy-L-tryptophan. The synthesis of the fourth apf1 substrate is more complex. The fatty acid synthase apf5 is involved in the synthesis of the octanoic acid backbone of L-2-aminooctanedioic acid by fixing one acetyl-CoA unit and three malonyl-CoA units. Then one of the cytochrome P450 monooxygenases (apf7 or apf8) may oxidize this backbone to 2-oxooctanoic acid. The aminotransferase apf4 is predicted to catalyze the exchange of the keto group with an amino group. The next step would be the oxidation of 2-aminooctanoic acid by one of the cytochrome P450 monooxygenases (apf7 or apf8). The last step is the oxidation of 2-amino-8-hydroxyoctanoic acid to 2-aminooctanedioic acid is catalyzed by the FAD-dependent monooxygenase apf9. In Gibberella fujikuroi (strain CBS 195.34 / IMI 58289 / NRRL A-6831) (Bakanae and foot rot disease fungus), this protein is Apicidin F synthase.